A 476-amino-acid chain; its full sequence is Cytochrome c oxidase subunit 1 (476 aa).

A helical membrane pass occupies residues 19 to 39 (LYYLWFSFLFGTYGFLLSVIL). Glu-42 contacts Ca(2+). Transmembrane regions (helical) follow at residues 61–81 (MIFT…GLFG), 105–125 (ISLL…AAEF), 144–164 (LSPV…IASI), 194–214 (IIIT…GVLM), 240–260 (LFWF…FGVI), 278–298 (MILA…HHMY), 309–329 (FFTS…FNWL), and 345–365 (LLCL…VILG). His-66 provides a ligand contact to Fe(II)-heme a. His-246 contacts Cu cation. The segment at residues 246 to 250 (HPEVY) is a cross-link (1'-histidyl-3'-tyrosine (His-Tyr)). Residue Tyr-250 coordinates O2. 2 residues coordinate Cu cation: His-295 and His-296. Mg(2+)-binding residues include His-374 and Asp-375. 2 helical membrane-spanning segments follow: residues 379–399 (VIAH…FTCV) and 415–435 (TLIV…FLPM). Position 382 (His-382) interacts with heme a3. His-384 is a Fe(II)-heme a binding site. Pro-448 is a binding site for Ca(2+). Residues 455–475 (NGWNMICSIGSTMTLFGLLIF) form a helical membrane-spanning segment.

This sequence belongs to the heme-copper respiratory oxidase family. As to quaternary structure, component of the cytochrome c oxidase (complex IV, CIV), a multisubunit enzyme composed of a catalytic core of 3 subunits and several supernumerary subunits. The complex exists as a monomer or a dimer and forms supercomplexes (SCs) in the inner mitochondrial membrane with ubiquinol-cytochrome c oxidoreductase (cytochrome b-c1 complex, complex III, CIII). It depends on heme as a cofactor. The cofactor is Cu cation.

It is found in the mitochondrion inner membrane. The catalysed reaction is 4 Fe(II)-[cytochrome c] + O2 + 8 H(+)(in) = 4 Fe(III)-[cytochrome c] + 2 H2O + 4 H(+)(out). The protein operates within energy metabolism; oxidative phosphorylation. Functionally, component of the cytochrome c oxidase, the last enzyme in the mitochondrial electron transport chain which drives oxidative phosphorylation. The respiratory chain contains 3 multisubunit complexes succinate dehydrogenase (complex II, CII), ubiquinol-cytochrome c oxidoreductase (cytochrome b-c1 complex, complex III, CIII) and cytochrome c oxidase (complex IV, CIV), that cooperate to transfer electrons derived from NADH and succinate to molecular oxygen, creating an electrochemical gradient over the inner membrane that drives transmembrane transport and the ATP synthase. Cytochrome c oxidase is the component of the respiratory chain that catalyzes the reduction of oxygen to water. Electrons originating from reduced cytochrome c in the intermembrane space (IMS) are transferred via the dinuclear copper A center (CU(A)) of subunit 2 and heme A of subunit 1 to the active site in subunit 1, a binuclear center (BNC) formed by heme A3 and copper B (CU(B)). The BNC reduces molecular oxygen to 2 water molecules using 4 electrons from cytochrome c in the IMS and 4 protons from the mitochondrial matrix. In Plasmodium berghei, this protein is Cytochrome c oxidase subunit 1 (COI).